The following is a 147-amino-acid chain: Large ribosomal subunit protein uL15 (147 aa).

The tract at residues 1-57 is disordered; that stretch reads MRLEDLRPTPGSMKKRKRVGRGPGSGHGKTSGRGHKGQKARGTGKVHPWFEGGQTPL. Positions 30–44 are enriched in basic residues; sequence TSGRGHKGQKARGTG.

This sequence belongs to the universal ribosomal protein uL15 family. Part of the 50S ribosomal subunit.

Functionally, binds to the 23S rRNA. This chain is Large ribosomal subunit protein uL15, found in Thermotoga neapolitana (strain ATCC 49049 / DSM 4359 / NBRC 107923 / NS-E).